The chain runs to 976 residues: 3-O-beta-L-arabinopyranosyl-alpha-L-arabinofuranosidase (976 aa).

The signal sequence occupies residues 1–28 (MSHRNKALVAIVAGTALLISSGAAIGQA). The Proton donor role is filled by Glu190. Residue Glu315 is the Nucleophile of the active site. Residues 519 to 654 (LLVEEVENTV…DNTLDKFLLY (136 aa)) enclose the CBM6 domain.

This sequence belongs to the glycosyl hydrolase 39 family.

The protein resides in the secreted. It carries out the reaction Hydrolysis of beta-L-Arap-(1-&gt;3)-L-Araf disaccharides from non-reducing terminals in branches of type II arabinogalactan attached to proteins.. Functionally, hydrolase involved in the degradation of the gum arabic arabinogalactan protein (AGP) and larch AGP. Catalyzes the release of 3-O-beta-L-arabinopyranosyl-L-arabinose (beta-L-Arap-(1-&gt;3)-L-Ara) from gum arabic AGP and larch AGP. Also cleaves a small amount of beta-L-Arap-(1-&gt;3)-L-Ara from sugar beet arabinan, but wheat AGP cannot be used as a substrate. Can also release 3-O-alpha-D-galactopyranosyl-L-arabinose (alpha-D-Galp-(1-&gt;3)-L-Ara) from gum arabic AGP, with low efficiency. In Bifidobacterium pseudocatenulatum, this protein is 3-O-beta-L-arabinopyranosyl-alpha-L-arabinofuranosidase.